Reading from the N-terminus, the 249-residue chain is Anti-H(O) lectin 2 (249 aa).

N-linked (GlcNAc...) asparagine glycosylation is present at N118. The Mn(2+) site is built by E130 and D132. Ca(2+) is bound by residues D132, Y134, N140, and D145. D145 and H148 together coordinate Mn(2+). N-linked (GlcNAc...) asparagine glycosylation is present at N245.

It belongs to the leguminous lectin family.

Di-N-acetylchitobiose specific lectin. The protein is Anti-H(O) lectin 2 of Ulex europaeus (Furze).